The following is a 356-amino-acid chain: Histidinol-phosphate aminotransferase (356 aa).

N6-(pyridoxal phosphate)lysine is present on Lys214.

It belongs to the class-II pyridoxal-phosphate-dependent aminotransferase family. Histidinol-phosphate aminotransferase subfamily. In terms of assembly, homodimer. Pyridoxal 5'-phosphate is required as a cofactor.

It carries out the reaction L-histidinol phosphate + 2-oxoglutarate = 3-(imidazol-4-yl)-2-oxopropyl phosphate + L-glutamate. It participates in amino-acid biosynthesis; L-histidine biosynthesis; L-histidine from 5-phospho-alpha-D-ribose 1-diphosphate: step 7/9. In Aromatoleum aromaticum (strain DSM 19018 / LMG 30748 / EbN1) (Azoarcus sp. (strain EbN1)), this protein is Histidinol-phosphate aminotransferase.